The sequence spans 626 residues: Probable potassium transport system protein Kup (626 aa).

The next 12 membrane-spanning stretches (helical) occupy residues 13 to 33 (VALM…SPLY), 53 to 73 (VLSI…VLLI), 102 to 122 (FFVV…MITP), 138 to 158 (HTLD…LFAI), 169 to 189 (LFGP…GWQV), 207 to 227 (FVFE…LALT), 248 to 268 (WFSM…ALLL), 277 to 297 (PFFL…ATVA), 338 to 358 (IYLP…VITF), 367 to 387 (AYGF…FAVL), 399 to 419 (WMLV…ANIF), and 421 to 441 (IHEG…LMMT).

This sequence belongs to the HAK/KUP transporter (TC 2.A.72) family.

The protein localises to the cell inner membrane. It carries out the reaction K(+)(in) + H(+)(in) = K(+)(out) + H(+)(out). Its function is as follows. Transport of potassium into the cell. Likely operates as a K(+):H(+) symporter. The protein is Probable potassium transport system protein Kup of Bordetella avium (strain 197N).